A 113-amino-acid polypeptide reads, in one-letter code: Hydrogenase maturation factor HypA (113 aa).

Ni(2+) is bound at residue His-2. Residues Cys-73, Cys-76, Cys-89, and Cys-92 each coordinate Zn(2+).

Belongs to the HypA/HybF family.

In terms of biological role, involved in the maturation of [NiFe] hydrogenases. Required for nickel insertion into the metal center of the hydrogenase. The protein is Hydrogenase maturation factor HypA of Albidiferax ferrireducens (strain ATCC BAA-621 / DSM 15236 / T118) (Rhodoferax ferrireducens).